A 341-amino-acid chain; its full sequence is D-aspartate oxidase (341 aa).

8 residues coordinate FAD: aspartate 36, arginine 37, threonine 43, serine 44, methionine 50, glycine 307, isoleucine 311, and serine 312. The Microbody targeting signal signature appears at 339–341 (SKL).

Belongs to the DAMOX/DASOX family. In terms of assembly, tetramer. Interacts with PEX5; the interaction is direct and required for localization of DDO to the peroxisome. FAD serves as cofactor. Expressed in liver and kidney (at protein level). In the brain, expressed in the frontal, temporal, and occipital lobes of the cortex, hippocampus, striatum, diencephalon, brainstem, cerebellum, spinal cord, plexus choroiderus and ependyma (at protein level). Also expressed in the lung, muscle, heart, spleen, small intestine and testis (at protein level).

The protein localises to the peroxisome matrix. Its subcellular location is the cytoplasm. It localises to the cytosol. It catalyses the reaction D-aspartate + O2 + H2O = oxaloacetate + H2O2 + NH4(+). It carries out the reaction D-glutamate + O2 + H2O = H2O2 + 2-oxoglutarate + NH4(+). With respect to regulation, inhibited by aminooxyacetic acid, malonate, meso-tartrate and potassium bromide. Functionally, selectively catalyzes the oxidative deamination of acidic amino acids. Suppresses the level of D-aspartate in the brain, an amino acid that can act as an agonist for glutamate receptors. Protects the organism from the toxicity of D-amino acids. May also function in the intestine. The sequence is that of D-aspartate oxidase from Rattus norvegicus (Rat).